A 387-amino-acid polypeptide reads, in one-letter code: MFVEALKRQNPALISAALSLWQQGKIAPDSWVIDVDQILENGKRLIETARLYGIELYLMTKQFGRNPWLAEKLLALGYSGIVAVDYKEARVMRRAGLPVAHQGHLVQIPCHQVADAVEQGTDVITVFTLDKAREVSAAAVKAGRIQSVLLKVYSDDDFLYPGQESGFALKVLPEIVAEIQNLPGLHLAGLTHFPCLLWDEAVGKVLPTPNLHTLIQARDQLAKSGIALEQLNAPSATSCTSLPLLAQYGVTHAEPGHALTGTIPANQQGDQPERIAMLWLSEISHHFRGDSYCYGGGYYRRGHAQHALVFTPENQKITETNLKTVDDSSIDYTLPLAGEFPVSSAVVLCFRTQIFVTRSDVVLVSGIHRGEPEIVGRYDSLGNSLGA.

This is an uncharacterized protein from Escherichia coli (strain K12).